The primary structure comprises 154 residues: Superoxide dismutase [Cu-Zn] (154 aa).

Positions 47, 49, and 64 each coordinate Cu cation. Cys-58 and Cys-147 are joined by a disulfide. His-64, His-72, His-81, and Asp-84 together coordinate Zn(2+). His-121 is a Cu cation binding site. Arg-144 contributes to the substrate binding site.

It belongs to the Cu-Zn superoxide dismutase family. In terms of assembly, homodimer. It depends on Cu cation as a cofactor. Requires Zn(2+) as cofactor.

It localises to the cytoplasm. The enzyme catalyses 2 superoxide + 2 H(+) = H2O2 + O2. Functionally, destroys radicals which are normally produced within the cells and which are toxic to biological systems. The sequence is that of Superoxide dismutase [Cu-Zn] (sodC) from Aspergillus fumigatus (strain ATCC MYA-4609 / CBS 101355 / FGSC A1100 / Af293) (Neosartorya fumigata).